A 169-amino-acid polypeptide reads, in one-letter code: Probable phospholipid hydroperoxide glutathione peroxidase (169 aa).

Residue C43 is part of the active site.

This sequence belongs to the glutathione peroxidase family.

Its subcellular location is the cytoplasm. The catalysed reaction is a hydroperoxy polyunsaturated fatty acid + 2 glutathione = a hydroxy polyunsaturated fatty acid + glutathione disulfide + H2O. In terms of biological role, protects cells and enzymes from oxidative damage, by catalyzing the reduction of hydrogen peroxide, lipid peroxides and organic hydroperoxide, by glutathione. This chain is Probable phospholipid hydroperoxide glutathione peroxidase, found in Nicotiana tabacum (Common tobacco).